We begin with the raw amino-acid sequence, 382 residues long: Probable dual-specificity RNA methyltransferase RlmN (382 aa).

Glutamate 118 functions as the Proton acceptor in the catalytic mechanism. The Radical SAM core domain maps to 124–370 (YDKRVTMCIS…TTVRDTRGSD (247 aa)). Cysteine 131 and cysteine 375 are joined by a disulfide. Residues cysteine 138, cysteine 142, and cysteine 145 each coordinate [4Fe-4S] cluster. S-adenosyl-L-methionine is bound by residues 196–197 (GE), serine 230, 253–255 (SLH), and asparagine 332. The active-site S-methylcysteine intermediate is cysteine 375.

The protein belongs to the radical SAM superfamily. RlmN family. It depends on [4Fe-4S] cluster as a cofactor.

It localises to the cytoplasm. It catalyses the reaction adenosine(2503) in 23S rRNA + 2 reduced [2Fe-2S]-[ferredoxin] + 2 S-adenosyl-L-methionine = 2-methyladenosine(2503) in 23S rRNA + 5'-deoxyadenosine + L-methionine + 2 oxidized [2Fe-2S]-[ferredoxin] + S-adenosyl-L-homocysteine. It carries out the reaction adenosine(37) in tRNA + 2 reduced [2Fe-2S]-[ferredoxin] + 2 S-adenosyl-L-methionine = 2-methyladenosine(37) in tRNA + 5'-deoxyadenosine + L-methionine + 2 oxidized [2Fe-2S]-[ferredoxin] + S-adenosyl-L-homocysteine. In terms of biological role, specifically methylates position 2 of adenine 2503 in 23S rRNA and position 2 of adenine 37 in tRNAs. This Kocuria rhizophila (strain ATCC 9341 / DSM 348 / NBRC 103217 / DC2201) protein is Probable dual-specificity RNA methyltransferase RlmN.